Here is a 655-residue protein sequence, read N- to C-terminus: RalA-binding protein 1 (655 aa).

A disordered region spans residues 1–158; the sequence is MTECFLPPTS…KKSKDLTAAD (158 aa). Thr-2 is subject to N-acetylthreonine. Over residues 24 to 33 the composition is skewed to polar residues; sequence LTRTPSSEEI. Phosphoserine is present on residues Ser-29, Ser-30, and Ser-34. Thr-44 carries the phosphothreonine modification. Phosphoserine is present on residues Ser-48 and Ser-62. Residues 52–68 show a composition bias toward basic and acidic residues; it reads DILHEPPDVVSDDEKDH. 69 to 74 serves as a coordination point for ATP; sequence GKKKGK. Residues 69–79 show a composition bias toward basic residues; the sequence is GKKKGKFKKKE. Ser-92 and Ser-93 each carry phosphoserine. Residues 102 to 118 show a composition bias toward basic residues; sequence KMKRSKGIHVFKKPSFS. Residues 102–119 form a nuclear localization signal region; it reads KMKRSKGIHVFKKPSFSK. Residues 119-155 show a composition bias toward basic and acidic residues; sequence KKKEKDFKIKEKPKEEKHKEEKHKEEKHKEKKSKDLT. Residues 154–219 form a mediates association with membranes and could form transmembrane domains region; it reads LTAADVVKQW…PAVFRECIDY (66 aa). Residues 192 to 380 form the Rho-GAP domain; sequence IPLADAVERT…VVLKQVMKPL (189 aa). The segment at 403–499 is mediates interaction with RALA and RALB; the sequence is RRQEFLLNCL…LTEQEELLAM (97 aa). 418–425 is a binding site for ATP; sequence GGIKDLSK. Residues Ser-461 and Ser-463 each carry the phosphoserine modification. The segment at 500 to 655 is mediates interaction with REPS1 and REPS2; the sequence is EQFLRRQIAS…PSRDRKETSI (156 aa). Disordered stretches follow at residues 525 to 551 and 601 to 655; these read QSRQQHGRSETEEYSSESESESEDEEE and AEQQ…ETSI. Acidic residues predominate over residues 536 to 551; the sequence is EEYSSESESESEDEEE. Residues 624 to 655 are compositionally biased toward basic and acidic residues; the sequence is GVLEPKAAKEQPKAGKEPAKPSPSRDRKETSI. At Ser-645 the chain carries Phosphoserine.

In terms of assembly, interacts with the GTP-bound form of RALA (via effector domain); during mitosis, recruits RALBP1 to the mitochondrion where it promotes DNM1L phosphorylation and mitochondrial fission. Interacts with DNM1L; mediates its mitotic kinase cyclin B-CDK1-mediated phosphorylation during mitosis to promote mitochondrial fission. Interacts with the mitotic kinase cyclin B-CDK1 during mitosis. Interacts with the GTP-bound form of RALB (via effector domain). Interacts with REPS1; the interaction is direct and does not affect RALA-binding nor GTPase activator activity of RALBP1. Interacts with REPS2; the interaction is direct and does not affect RALA-binding nor GTPase activator activity of RALBP1. Interacts with EPN1, NUMB and TFAP2A during interphase and mitosis. Interacts with AP2M1; as part of the AP2 complex. Interacts with CDC42. Interacts with RAC1. In terms of processing, tyrosine-phosphorylated upon stimulation of cells with EGF. Post-translationally, may undergo proteolytic cleavage to give peptides which reassemble to form a transporter complex. Expressed ubiquitously but at low levels. Shows a strong expression in the erythrocytes.

It localises to the cell membrane. The protein localises to the cytoplasm. It is found in the cytosol. The protein resides in the cytoskeleton. Its subcellular location is the spindle pole. It localises to the nucleus. The protein localises to the mitochondrion. The catalysed reaction is an S-substituted glutathione(in) + ATP + H2O = an S-substituted glutathione(out) + ADP + phosphate + H(+). The enzyme catalyses ATP + H2O + xenobioticSide 1 = ADP + phosphate + xenobioticSide 2.. It carries out the reaction leukotriene C4(in) + ATP + H2O = leukotriene C4(out) + ADP + phosphate + H(+). Multifunctional protein that functions as a downstream effector of RALA and RALB. As a GTPase-activating protein/GAP can inactivate CDC42 and RAC1 by stimulating their GTPase activity. As part of the Ral signaling pathway, may also regulate ligand-dependent EGF and insulin receptors-mediated endocytosis. During mitosis, may act as a scaffold protein in the phosphorylation of EPSIN/EPN1 by the mitotic kinase cyclin B-CDK1, preventing endocytosis during that phase of the cell cycle. During mitosis, also controls mitochondrial fission as an effector of RALA. Recruited to mitochondrion by RALA, acts as a scaffold to foster the mitotic kinase cyclin B-CDK1-mediated phosphorylation and activation of DNM1L. Its function is as follows. Could also function as a primary ATP-dependent active transporter for glutathione conjugates of electrophiles. May also actively catalyze the efflux of a wide range of substrates including xenobiotics like doxorubicin (DOX) contributing to cell multidrug resistance. The polypeptide is RalA-binding protein 1 (Homo sapiens (Human)).